We begin with the raw amino-acid sequence, 226 residues long: Gap junction beta-2 protein (226 aa).

An intramembrane segment occupies 2–13 (DWGALQTILGGV). Residues 14–20 (NKHSTSI) lie on the Cytoplasmic side of the membrane. Residues 21–40 (GKIWLTVLFIFRIMILVVAA) form a helical membrane-spanning segment. At 41 to 73 (KEVWGDEQADFVCNTLQPGCKNVCYDHYFPISH) the chain is on the extracellular side. Ca(2+) is bound by residues Glu42, Gly45, and Glu47. 3 disulfides stabilise this stretch: Cys53/Cys180, Cys60/Cys174, and Cys64/Cys169. Residues 74–94 (IRLWALQLIFVSTPALLVAMH) traverse the membrane as a helical segment. The Cytoplasmic portion of the chain corresponds to 95–135 (VAYRRHEKKRKFIKGEIKSEFKDIEEIKTQKVRIEGSLWWT). A helical transmembrane segment spans residues 136-156 (YTSSIFFRVIFEAAFMYVFYV). At 157 to 189 (MYDGFSMQRLVKCNAWPCPNTVDCFVSRPTEKT) the chain is on the extracellular side. A helical transmembrane segment spans residues 190 to 210 (VFTVFMIAVSGICILLNVTEL). Residues 211–226 (CYLLIRYCSGRSKKPV) are Cytoplasmic-facing.

The protein belongs to the connexin family. Beta-type (group I) subfamily. In terms of assembly, a hemichannel or connexon is composed of a hexamer of connexins. A functional gap junction is formed by the apposition of two hemichannels. Forms heteromeric channels with GJB4. Interacts with CNST.

The protein localises to the cell membrane. The protein resides in the cell junction. It localises to the gap junction. Structural component of gap junctions. Gap junctions are dodecameric channels that connect the cytoplasm of adjoining cells. They are formed by the docking of two hexameric hemichannels, one from each cell membrane. Small molecules and ions diffuse from one cell to a neighboring cell via the central pore. This chain is Gap junction beta-2 protein (GJB2), found in Pongo pygmaeus (Bornean orangutan).